The chain runs to 314 residues: Putative steroid dehydrogenase 1 (314 aa).

47–76 lines the NADP(+) pocket; that stretch reads ASWAVVTGATDGIGKSYSFELAKRGFNVYI. Tyrosine 202 is a catalytic residue.

This sequence belongs to the short-chain dehydrogenases/reductases (SDR) family. 17-beta-HSD 3 subfamily.

This is Putative steroid dehydrogenase 1 (stdh-1) from Caenorhabditis elegans.